Reading from the N-terminus, the 152-residue chain is MKKMIGSPGTMSGLILRLGQCATAAASIGVMVSSYDFSNYTAFCFLVASMGLQLIWSFGLACLDVYAIRRKSDLRSPILLSLFTVGDWVTALLALAAACSSAGVTVLFTKDTEFCRQQPALSCDRFQISVGLSFFNWFLAAISSHTMFWILI.

Over 1-11 the chain is Cytoplasmic; the sequence is MKKMIGSPGTM. Residues 12-32 form a helical membrane-spanning segment; it reads SGLILRLGQCATAAASIGVMV. Residues 33–42 are Extracellular-facing; that stretch reads SSYDFSNYTA. Asn-39 carries an N-linked (GlcNAc...) asparagine glycan. The chain crosses the membrane as a helical span at residues 43 to 63; sequence FCFLVASMGLQLIWSFGLACL. Residues 64-77 are Cytoplasmic-facing; sequence DVYAIRRKSDLRSP. Residues 78-98 traverse the membrane as a helical segment; that stretch reads ILLSLFTVGDWVTALLALAAA. At 99-131 the chain is on the extracellular side; it reads CSSAGVTVLFTKDTEFCRQQPALSCDRFQISVG. Residues 132–152 traverse the membrane as a helical segment; that stretch reads LSFFNWFLAAISSHTMFWILI.

This sequence belongs to the Casparian strip membrane proteins (CASP) family. As to quaternary structure, homodimer and heterodimers. As to expression, expressed in leaves, exclusively in hair cells (e.g. differentiated trichomes and immature cells).

It is found in the cell membrane. In Arabidopsis thaliana (Mouse-ear cress), this protein is CASP-like protein 5B1.